The sequence spans 528 residues: Adhesion G-protein coupled receptor G5 (528 aa).

A signal peptide spans 1–21; that stretch reads MDHCGALFLCLCLLTLQNATT. The Extracellular portion of the chain corresponds to 22 to 245; it reads ETWEELLSYM…SPALVPAELL (224 aa). N58, N65, N146, N147, N173, and N179 each carry an N-linked (GlcNAc...) asparagine glycan. The 162-residue stretch at 78-239 folds into the GAIN-B domain; sequence FKLSCDFSGL…AVLMQLSPAL (162 aa). Cystine bridges form between C189/C221 and C209/C223. The tract at residues 189–239 is GPS; that stretch reads CVFWKEGARKQPWGGWSPEGCRTEQPSHSQVLCRCNHLTYFAVLMQLSPAL. The interval 228–236 is stachel; that stretch reads YFAVLMQLS. The helical transmembrane segment at 246–271 threads the bilayer; it reads APLTYISLVGCSISIVASLITVLLHF. Residues 272–280 are Cytoplasmic-facing; it reads HFRKQSDSL. Residues 281–304 traverse the membrane as a helical segment; it reads TRIHMNLHASVLLLNIAFLLSPAF. At 305–314 the chain is on the extracellular side; that stretch reads AMSPVPGSAC. Residues C314 and C404 are joined by a disulfide bond. A helical membrane pass occupies residues 315-340; the sequence is TALAAALHYALLSCLTWMAIEGFNLY. Residues 341 to 353 lie on the Cytoplasmic side of the membrane; that stretch reads LLLGRVYNIYIRR. Residues 354–377 traverse the membrane as a helical segment; it reads YVFKLGVLGWGAPALLVLLSLSVK. Over 378–410 the chain is Extracellular; that stretch reads SSVYGPCTIPVFDSWENGTGFQNMSICWVRSPV. N-linked (GlcNAc...) asparagine glycosylation is found at N394 and N400. A helical membrane pass occupies residues 411–435; that stretch reads VHSVLVMGYGGLTSLFNLVVLAWAL. Residues 436-455 lie on the Cytoplasmic side of the membrane; sequence WTLRRLRERADAPSVRACHD. A helical membrane pass occupies residues 456 to 477; sequence TVTVLGLTVLLGTTWALAFFSF. Over 478 to 481 the chain is Extracellular; it reads GVFL. The helical transmembrane segment at 482–505 threads the bilayer; it reads LPQLFLFTILNSLYGFFLFLWFCS. At 506 to 528 the chain is on the cytoplasmic side; it reads QRCRSEAEAKAQIEAFSSSQTTQ.

Belongs to the G-protein coupled receptor 2 family. Adhesion G-protein coupled receptor (ADGR) subfamily. Heterodimer of 2 chains generated by proteolytic processing; the large extracellular N-terminal fragment and the membrane-bound C-terminal fragment predominantly remain associated and non-covalently linked. Post-translationally, autoproteolytically processed at the GPS region of the GAIN-B domain; this cleavage modulates receptor activity. In terms of processing, N-glycsylated. Expressed in immune cells. Primarily found in granulocytes. Found in eosinophils.

It localises to the cell membrane. Forms a heterodimer of 2 chains generated by proteolytic processing that remain associated through non-covalent interactions mediated by the GAIN-B domain. In the inactivated receptor, the Stachel sequence (also named stalk) is embedded in the GAIN-B domain, where it adopts a beta-strand conformation. On activation, the Stachel moves into the 7 transmembrane region and adopts a twisted hook-shaped configuration that forms contacts within the receptor, leading to coupling of a G-alpha protein, which activates signaling. The cleaved GAIN-B and N-terminal domains can then dissociate from the rest of the receptor. Its function is as follows. Orphan adhesion G-protein coupled receptor (aGPCR). Ligand binding causes a conformation change that triggers signaling via guanine nucleotide-binding proteins (G proteins) and modulates the activity of downstream effectors, such as adenylate cyclase. ADGRG5 is specifically coupled to G(s) G proteins and mediates activation of adenylate cyclase activity. In Homo sapiens (Human), this protein is Adhesion G-protein coupled receptor G5.